Consider the following 415-residue polypeptide: Queuine tRNA-ribosyltransferase accessory subunit 2 (415 aa).

The Zn(2+) site is built by cysteine 351, cysteine 353, cysteine 356, and histidine 382.

Belongs to the queuine tRNA-ribosyltransferase family. QTRT2 subfamily. In terms of assembly, heterodimer of a catalytic subunit QTRT1 and an accessory subunit QTRT2. It depends on Zn(2+) as a cofactor.

The protein resides in the cytoplasm. It localises to the mitochondrion outer membrane. Functionally, non-catalytic subunit of the queuine tRNA-ribosyltransferase (TGT) that catalyzes the base-exchange of a guanine (G) residue with queuine (Q) at position 34 (anticodon wobble position) in tRNAs with GU(N) anticodons (tRNA-Asp, -Asn, -His and -Tyr), resulting in the hypermodified nucleoside queuosine (7-(((4,5-cis-dihydroxy-2-cyclopenten-1-yl)amino)methyl)-7-deazaguanosine). The polypeptide is Queuine tRNA-ribosyltransferase accessory subunit 2 (Homo sapiens (Human)).